A 45-amino-acid chain; its full sequence is MSKRTFQPNNRRRAKKHGFRLRMRTRAGRAILAARRGKGRVELSA.

Belongs to the bacterial ribosomal protein bL34 family.

In Paenarthrobacter aurescens (strain TC1), this protein is Large ribosomal subunit protein bL34.